We begin with the raw amino-acid sequence, 345 residues long: MGRFKNNKKSRVIGKPIAKKNQEDVSHVTGDKIPKSFVFSRMKLAGPVKQLQMDLRKLMLPYTALSLKEKKRNTLRDFLNVSGPMGVTHFLMLSKTASSLSLRVARTPQGPTLTFKIHQYSLASDIAQSQLRPRCPQDLFKSPPLIVLSGFGSQELHLKLATIMFQNIFPAIDINTVKLSTCQRLVLLNYNKDTKLIDFRHYSIRLQPVGVSRRIRKFVQNHQVPDLRNLQDVSDFVTKAGYGSESEGDEEAATVTLSSDLGRVNKGATKSAVKLQEIGPRMTMQLVKVEEGLCTGGIIFSEYDVDGKKEKLKKKQDEEEEEDSEEEGEEGSEEDGEDMDEDFED.

The region spanning 34–295 is the Brix domain; that stretch reads PKSFVFSRMK…LVKVEEGLCT (262 aa). The stretch at 307 to 329 forms a coiled coil; it reads GKKEKLKKKQDEEEEEDSEEEGE. The tract at residues 308–345 is disordered; it reads KKEKLKKKQDEEEEEDSEEEGEEGSEEDGEDMDEDFED. The segment covering 318 to 345 has biased composition (acidic residues); that stretch reads EEEEEDSEEEGEEGSEEDGEDMDEDFED.

This sequence belongs to the PPAN family.

Its function is as follows. May play a role in cell growth, differentiation and cell cycle progression. This chain is Peter Pan-like protein (PPAN), found in Arabidopsis thaliana (Mouse-ear cress).